Here is a 586-residue protein sequence, read N- to C-terminus: CTP synthase 2 (586 aa).

One can recognise a Glutamine amidotransferase type-1 domain in the interval 300-554 (SIALVGKYTK…LAATGNLNAH (255 aa)). Residues C399, H526, and E528 each act as for GATase activity in the active site. A phosphoserine mark is found at S568, S571, and S574.

It belongs to the CTP synthase family.

It carries out the reaction UTP + L-glutamine + ATP + H2O = CTP + L-glutamate + ADP + phosphate + 2 H(+). Its pathway is pyrimidine metabolism; CTP biosynthesis via de novo pathway; CTP from UDP: step 2/2. Its function is as follows. Catalyzes the ATP-dependent amination of UTP to CTP with either L-glutamine or ammonia as the source of nitrogen. Constitutes the rate-limiting enzyme in the synthesis of cytosine nucleotides. This is CTP synthase 2 (Ctps2) from Mus musculus (Mouse).